The chain runs to 365 residues: Carbamoyl phosphate synthase small chain (365 aa).

CPSase stretches follow at residues 1–166 (MKRQ…PSPG) and 1–169 (MKRQ…GRGH). Residues Ser45, Gly218, and Gly220 each coordinate L-glutamine. Positions 170-357 (RVVLVDFGMK…LTMIENFKKE (188 aa)) constitute a Glutamine amidotransferase type-1 domain. Cys245 (nucleophile) is an active-site residue. Residues Leu246, Gln249, Asn287, Gly289, and Tyr290 each contribute to the L-glutamine site. Residues His330 and Glu332 contribute to the active site.

This sequence belongs to the CarA family. Composed of two chains; the small (or glutamine) chain promotes the hydrolysis of glutamine to ammonia, which is used by the large (or ammonia) chain to synthesize carbamoyl phosphate. Tetramer of heterodimers (alpha,beta)4.

It carries out the reaction hydrogencarbonate + L-glutamine + 2 ATP + H2O = carbamoyl phosphate + L-glutamate + 2 ADP + phosphate + 2 H(+). The enzyme catalyses L-glutamine + H2O = L-glutamate + NH4(+). Its pathway is amino-acid biosynthesis; L-arginine biosynthesis; carbamoyl phosphate from bicarbonate: step 1/1. It participates in pyrimidine metabolism; UMP biosynthesis via de novo pathway; (S)-dihydroorotate from bicarbonate: step 1/3. Functionally, small subunit of the glutamine-dependent carbamoyl phosphate synthetase (CPSase). CPSase catalyzes the formation of carbamoyl phosphate from the ammonia moiety of glutamine, carbonate, and phosphate donated by ATP, constituting the first step of 2 biosynthetic pathways, one leading to arginine and/or urea and the other to pyrimidine nucleotides. The small subunit (glutamine amidotransferase) binds and cleaves glutamine to supply the large subunit with the substrate ammonia. The chain is Carbamoyl phosphate synthase small chain from Bacillus anthracis.